The sequence spans 348 residues: Nuclear receptor subfamily 1 group I member 3 (348 aa).

The segment at residues 8–83 is a DNA-binding region (nuclear receptor); the sequence is PRSCMVCGDR…AGMKKEMILS (76 aa). The segment at 11-31 adopts an NR C4-type zinc-finger fold; that stretch reads CMVCGDRATGYHFHALTCEGC. T38 bears the Phosphothreonine; by PKC mark. An NR C4-type zinc finger spans residues 47 to 71; that stretch reads CPFAGSCKVNKAQRRHCPACRLQKC. The NR LBD domain occupies 109 to 348; sequence GQQELVQTLL…MMPLLQEICS (240 aa).

The protein belongs to the nuclear hormone receptor family. NR1 subfamily. In terms of assembly, heterodimer of NR1I3 and RXR. Interacts with PSMC4. Interacts with ECT2. Directly interacts with DNAJC7; this complex may also include HSP90. Interacts with CRY1. Interacts with CRY2 in a ligand-dependent manner. Post-translationally, phosphorylated at Thr-38 by PKC, dephosphorylation of Thr-38 is required for nuclear translocation and activation.

The protein resides in the nucleus. The protein localises to the cytoplasm. It is found in the cytoskeleton. Its function is as follows. Binds and transactivates the retinoic acid response elements that control expression of the retinoic acid receptor beta 2 and alcohol dehydrogenase 3 genes. Transactivates both the phenobarbital responsive element module of the human CYP2B6 gene and the CYP3A4 xenobiotic response element. This Pusa sibirica (Baikal seal) protein is Nuclear receptor subfamily 1 group I member 3 (NR1I3).